The primary structure comprises 308 residues: Bifunctional protein FolD (308 aa).

Residues 175-177 (GRS), Ser-200, and Ile-241 contribute to the NADP(+) site.

This sequence belongs to the tetrahydrofolate dehydrogenase/cyclohydrolase family. In terms of assembly, homodimer.

It catalyses the reaction (6R)-5,10-methylene-5,6,7,8-tetrahydrofolate + NADP(+) = (6R)-5,10-methenyltetrahydrofolate + NADPH. It carries out the reaction (6R)-5,10-methenyltetrahydrofolate + H2O = (6R)-10-formyltetrahydrofolate + H(+). It functions in the pathway one-carbon metabolism; tetrahydrofolate interconversion. Its function is as follows. Catalyzes the oxidation of 5,10-methylenetetrahydrofolate to 5,10-methenyltetrahydrofolate and then the hydrolysis of 5,10-methenyltetrahydrofolate to 10-formyltetrahydrofolate. The chain is Bifunctional protein FolD from Jannaschia sp. (strain CCS1).